The sequence spans 1071 residues: Tricorn protease (1071 aa).

The six-bladed beta propeller stretch occupies residues methionine 39–aspartate 310. The segment at arginine 131–arginine 132 is binds the substrate's C-terminus. Residues alanine 326–lysine 675 are seven-bladed beta propeller. Residues valine 679–serine 745 form a C-1; helical bundle region. Histidine 746 acts as the Charge relay system in catalysis. Residues arginine 761 to aspartate 855 form a PDZ-like region. The tract at residues arginine 856 to asparagine 1061 is C-2; alpha-beta sandwich. Residue glycine 916–glycine 918 participates in substrate binding. The active-site Nucleophile is serine 965. Glycine 993–threonine 995 is a binding site for substrate. Glutamate 1023 serves as the catalytic Charge relay system.

Belongs to the peptidase S41B family. Part of the Tricorn proteolytic complex. Assembles to form a hexameric toroid, 20 copies of which may then assemble to form an icosahedral supermolecule of 14.6 MDa.

Its subcellular location is the cytoplasm. Tricorn degrades oligopeptides (probably derived from the proteasome) and channels the products to F1, F2 and F3 proteases, which then catalyze the terminal degradation step, yielding free amino acids. The chain is Tricorn protease (tri) from Thermoplasma acidophilum (strain ATCC 25905 / DSM 1728 / JCM 9062 / NBRC 15155 / AMRC-C165).